The primary structure comprises 759 residues: NADP-dependent malic enzyme (759 aa).

The segment at 1-428 (MDEQLKQSAL…KLTEFVYKTN (428 aa)) is malic enzyme. Tyrosine 39 acts as the Proton donor in catalysis. The active-site Proton acceptor is the lysine 94. Residues glutamate 136, aspartate 137, and aspartate 162 each coordinate a divalent metal cation. NADP(+)-binding positions include 195–198 (AGAA), asparagine 288, and asparagine 320. The interval 429–759 (LFMKPIFSQA…AVVEAQTTPL (331 aa)) is phosphate acetyltransferase.

It in the N-terminal section; belongs to the malic enzymes family. In the C-terminal section; belongs to the phosphate acetyltransferase and butyryltransferase family. Requires Mg(2+) as cofactor. Mn(2+) is required as a cofactor.

The catalysed reaction is (S)-malate + NADP(+) = pyruvate + CO2 + NADPH. It catalyses the reaction oxaloacetate + H(+) = pyruvate + CO2. In Salmonella typhimurium (strain LT2 / SGSC1412 / ATCC 700720), this protein is NADP-dependent malic enzyme (maeB).